The primary structure comprises 211 residues: Ferritin heavy chain (211 aa).

Positions 1-20 (MNSILLVFAGILAVCLPASA) are cleaved as a signal peptide. A Ferritin-like diiron domain is found at 35–191 (ITMHRSCRNS…GKASTLKKLM (157 aa)). Cys41 and Cys150 form a disulfide bridge. Positions 52, 87, 90, 136, and 173 each coordinate Fe cation.

This sequence belongs to the ferritin family. As to quaternary structure, oligomer of 12 light (L) chains and 12 heavy (H) chains; L and H chains are disulfide-linked. The functional molecule forms a roughly spherical shell with a diameter of 12 nm and contains a central cavity into which the insoluble ferric iron core is deposited.

It localises to the golgi apparatus. The protein resides in the secreted. The catalysed reaction is 4 Fe(2+) + O2 + 4 H(+) = 4 Fe(3+) + 2 H2O. In terms of biological role, stores iron in a soluble, non-toxic, readily available form. Important for iron homeostasis. Iron is taken up in the ferrous form and deposited as ferric hydroxides after oxidation. Ferritin is composed of a heavy (H) chain which is responsible for the oxidation and uptake of ferrous iron, and a light (L) chain which facilitates the nucleation of the ferrihydrite iron core. The sequence is that of Ferritin heavy chain from Trichoplusia ni (Cabbage looper).